Reading from the N-terminus, the 149-residue chain is Probable flagellum biosynthesis repressor protein FlbT (149 aa).

Belongs to the FlbT family.

Its function is as follows. Has a post-transcriptional repressor function in flagellum biogenesis. Associates with the 5'-UTR of fljK mRNA and promotes its degradation. The polypeptide is Probable flagellum biosynthesis repressor protein FlbT (Agrobacterium fabrum (strain C58 / ATCC 33970) (Agrobacterium tumefaciens (strain C58))).